The chain runs to 65 residues: Conopeptide Vt3.2 (65 aa).

Residues 1–12 (LLFPLATLQLNA) form the signal peptide. A propeptide spanning residues 13–48 (DQPVERNAENIQDLNPDKRFIFMPVPRRRGPYGSVH) is cleaved from the precursor. At serine 64 the chain carries Serine amide.

Belongs to the conotoxin M superfamily. As to quaternary structure, homodimer; disulfide-linked. Expressed by the venom duct.

It localises to the secreted. In Conus planorbis (Planorbis cone), this protein is Conopeptide Vt3.2.